Reading from the N-terminus, the 328-residue chain is DNA-directed RNA polymerase subunit alpha (328 aa).

The tract at residues 1–244 is alpha N-terminal domain (alpha-NTD); it reads MEKFLKYEIK…EHLNPIVSVN (244 aa). Positions 261 to 328 are alpha C-terminal domain (alpha-CTD); the sequence is KVKSFAKQIE…VQELGLKFRS (68 aa).

The protein belongs to the RNA polymerase alpha chain family. As to quaternary structure, homodimer. The RNAP catalytic core consists of 2 alpha, 1 beta, 1 beta' and 1 omega subunit. When a sigma factor is associated with the core the holoenzyme is formed, which can initiate transcription.

It catalyses the reaction RNA(n) + a ribonucleoside 5'-triphosphate = RNA(n+1) + diphosphate. In terms of biological role, DNA-dependent RNA polymerase catalyzes the transcription of DNA into RNA using the four ribonucleoside triphosphates as substrates. This chain is DNA-directed RNA polymerase subunit alpha, found in Mycoplasma genitalium (strain ATCC 33530 / DSM 19775 / NCTC 10195 / G37) (Mycoplasmoides genitalium).